We begin with the raw amino-acid sequence, 962 residues long: Leucine-rich repeat-containing G-protein coupled receptor 6 (962 aa).

The N-terminal stretch at 1 to 16 is a signal peptide; it reads MLVVLLILHAVSCAHS. The LRRNT domain maps to 20–60; sequence PGAAVPVKQCPSACQCEEDGILLLVDCSEQGLSSVPTDLSP. LRR repeat units follow at residues 38–58, 59–82, 83–106, 107–131, 133–154, 155–178, 179–202, 203–226, 228–250, 251–273, 275–297, 298–321, 322–344, 345–368, 370–390, 391–414, and 416–438; these read DGILLLVDCSEQGLSSVPTDL, SPLTSYLDLSMNNISEIQPNAFRN, LHFLSELRLSGNHLRHIPGPMLQG, LYNLKVLMLQNNQLERLPSEDPWEL, NLLSLRLDANLIMEVPARTLSG, MRSLRHLWLDDNALTEIPVSALND, LSSLQAMTLALNRITLIPDYAFRN, LSNLVVLHLHNNMIRTLGQNCFEG, HSLETLELNFNDLQEFPVAIRTL, AKLQELGFHNNNIKAIPERAFVG, PLLQTIHFYENPIQFVGRSAFQF, LPKLHTLSLNGATEIREFPDLKGT, TSLQVLTLTRAGLTSLPYDLCHL, LPKLKVLELSHNVIEELPSFYHCT, LQEIGLQHNLIKQIEMNTFQQ, LGSLRSLDLSWNSINSIHPDAFFS, and QSLIKLDLTGNRLSNLPMTGLTS. Asn-71 is a glycosylation site (N-linked (GlcNAc...) asparagine). The N-linked (GlcNAc...) asparagine glycan is linked to Asn-202. A run of 7 helical transmembrane segments spans residues 559 to 579, 590 to 610, 647 to 669, 679 to 699, 723 to 743, 766 to 786, and 801 to 821; these read GMWLISLVSLMGNSLLILTVF, FIIGTISGANLLTGLCTGTLA, SILFLTLAAVQCSVSVSCARAYG, AAAVACLALSLAVAALPLIGV, FMVALIMMNSLCFLVITGTYI, VAWLIFTNCLLYCPVAFLTFS, and SVVLVLLPLPASINPLLYLLF. A disulfide bond links Cys-633 and Cys-708.

This sequence belongs to the G-protein coupled receptor 1 family.

It is found in the cell membrane. In terms of biological role, receptor for R-spondins that potentiates the canonical Wnt signaling pathway. Upon binding to R-spondins (rspo1, rspo2, rspo3 or rspo4), associates with phosphorylated lrp6 and frizzled receptors that are activated by extracellular Wnt receptors, triggering the canonical Wnt signaling pathway to increase expression of target genes. In contrast to classical G-protein coupled receptors, does not activate heterotrimeric G-proteins to transduce the signal. This chain is Leucine-rich repeat-containing G-protein coupled receptor 6 (lgr6), found in Danio rerio (Zebrafish).